An 82-amino-acid chain; its full sequence is Small ribosomal subunit protein bS16 (82 aa).

The protein belongs to the bacterial ribosomal protein bS16 family.

This is Small ribosomal subunit protein bS16 from Aeromonas hydrophila subsp. hydrophila (strain ATCC 7966 / DSM 30187 / BCRC 13018 / CCUG 14551 / JCM 1027 / KCTC 2358 / NCIMB 9240 / NCTC 8049).